A 261-amino-acid polypeptide reads, in one-letter code: tRNA (guanine-N(7)-)-methyltransferase (261 aa).

The S-adenosyl-L-methionine site is built by glutamate 75, glutamate 100, aspartate 127, and aspartate 150. Aspartate 150 is an active-site residue. Lysine 154 contributes to the substrate binding site. Residues 156–161 (RHNKRR) are interaction with RNA. Substrate is bound by residues aspartate 186 and 223–226 (THFE).

Belongs to the class I-like SAM-binding methyltransferase superfamily. TrmB family.

The enzyme catalyses guanosine(46) in tRNA + S-adenosyl-L-methionine = N(7)-methylguanosine(46) in tRNA + S-adenosyl-L-homocysteine. The protein operates within tRNA modification; N(7)-methylguanine-tRNA biosynthesis. In terms of biological role, catalyzes the formation of N(7)-methylguanine at position 46 (m7G46) in tRNA. This chain is tRNA (guanine-N(7)-)-methyltransferase, found in Xanthomonas axonopodis pv. citri (strain 306).